A 1116-amino-acid polypeptide reads, in one-letter code: Ubiquitin C-terminal hydrolase 12 (1116 aa).

Pro residues predominate over residues 1–10; that stretch reads MTMMTPPPVD. The disordered stretch occupies residues 1–52; that stretch reads MTMMTPPPVDQPEDEEMLVPNSDLVDGPAQPMEVTQPETAASTVENQPAEDP. A compositionally biased stretch (polar residues) spans 36–46; the sequence is QPETAASTVEN. Positions 54-179 constitute an MATH domain; that stretch reads TLKFTWTIPN…NDTVLVEAEV (126 aa). The region spanning 199–524 is the USP domain; sequence VGLKNQGATC…NAYMLVYIRE (326 aa). Catalysis depends on cysteine 208, which acts as the Nucleophile. Histidine 455 acts as the Proton acceptor in catalysis.

Belongs to the peptidase C19 family. Interacts with SIC/RON3.

The catalysed reaction is Thiol-dependent hydrolysis of ester, thioester, amide, peptide and isopeptide bonds formed by the C-terminal Gly of ubiquitin (a 76-residue protein attached to proteins as an intracellular targeting signal).. Functionally, recognizes and hydrolyzes the peptide bond at the C-terminal Gly of ubiquitin. Involved in the processing of poly-ubiquitin precursors as well as that of ubiquitinated proteins. Positive regulator of root meristem development that, together with UBP13, prevents the ubiquitination and turnover of RGFR1 induced by the RGF1 hormone peptide, thus influencing PLT1 and PLT2 expression. This is Ubiquitin C-terminal hydrolase 12 from Arabidopsis thaliana (Mouse-ear cress).